Reading from the N-terminus, the 86-residue chain is MKEGIHPNYREVVFQDMSNGFKFITRSTIQTRENIELDGKTYPLAKIEVSSESHSFYTGQQKIMDTAGRVEKFKNKFGVRASGKAK.

The protein belongs to the bacterial ribosomal protein bL31 family. Type B subfamily. As to quaternary structure, part of the 50S ribosomal subunit.

The sequence is that of Large ribosomal subunit protein bL31B from Burkholderia lata (strain ATCC 17760 / DSM 23089 / LMG 22485 / NCIMB 9086 / R18194 / 383).